Here is a 437-residue protein sequence, read N- to C-terminus: Histidinol dehydrogenase (437 aa).

NAD(+) contacts are provided by Tyr-133, Gln-191, and Asn-214. Residues Ser-240, Gln-262, and His-265 each contribute to the substrate site. Gln-262 and His-265 together coordinate Zn(2+). Catalysis depends on proton acceptor residues Glu-329 and His-330. Residues His-330, Asp-363, Glu-417, and His-422 each contribute to the substrate site. Residue Asp-363 coordinates Zn(2+). His-422 contacts Zn(2+).

The protein belongs to the histidinol dehydrogenase family. As to quaternary structure, homodimer. Requires Zn(2+) as cofactor.

It carries out the reaction L-histidinol + 2 NAD(+) + H2O = L-histidine + 2 NADH + 3 H(+). It participates in amino-acid biosynthesis; L-histidine biosynthesis; L-histidine from 5-phospho-alpha-D-ribose 1-diphosphate: step 9/9. Its function is as follows. Catalyzes the sequential NAD-dependent oxidations of L-histidinol to L-histidinaldehyde and then to L-histidine. This is Histidinol dehydrogenase from Blochmanniella floridana.